The chain runs to 225 residues: PKHD-type hydroxylase YbiX (225 aa).

The Fe2OG dioxygenase domain occupies 78–177 (TLSTPLFNRY…RVASFMWIQS (100 aa)). Positions 96, 98, and 158 each coordinate Fe cation. Position 168 (arginine 168) interacts with 2-oxoglutarate.

Requires Fe(2+) as cofactor. L-ascorbate is required as a cofactor.

The chain is PKHD-type hydroxylase YbiX from Escherichia coli O7:K1 (strain IAI39 / ExPEC).